We begin with the raw amino-acid sequence, 402 residues long: Tumor necrosis factor receptor superfamily member 11B (402 aa).

The N-terminal stretch at 1–21 (MNKLLCCALVFLDISIKWTTQ) is a signal peptide. TNFR-Cys repeat units follow at residues 24–62 (FPPK…KTVC), 64–105 (PCPD…NRVC), 106–142 (ECEE…NTVC), and 144–185 (RCPD…DNIC). Disulfide bonds link cysteine 41–cysteine 54, cysteine 44–cysteine 62, cysteine 65–cysteine 80, cysteine 83–cysteine 97, cysteine 87–cysteine 105, cysteine 107–cysteine 118, cysteine 124–cysteine 142, and cysteine 145–cysteine 160. Asparagine 165 and asparagine 178 each carry an N-linked (GlcNAc...) asparagine glycan. Cysteine 166 and cysteine 185 are joined by a disulfide. Death domains follow at residues 198–269 (IDMT…DMVK) and 270–365 (KIIQ…VIQS).

In terms of assembly, homodimer. Interacts with TNFSF10 and TNFSF11. Post-translationally, N-glycosylated. Contains sialic acid residues.

It is found in the secreted. Its function is as follows. Acts as a decoy receptor for TNFSF11/RANKL and thereby neutralizes its function in osteoclastogenesis. Inhibits the activation of osteoclasts and promotes osteoclast apoptosis. Bone homeostasis seems to depend on the local ratio between TNFSF11 and TNFRSF11B. May also play a role in preventing arterial calcification. May act as decoy receptor for TNFSF10/TRAIL and protect against apoptosis. TNFSF10/TRAIL binding blocks the inhibition of osteoclastogenesis. The sequence is that of Tumor necrosis factor receptor superfamily member 11B (TNFRSF11B) from Bos taurus (Bovine).